The primary structure comprises 419 residues: Gamma-glutamyl phosphate reductase (419 aa).

The protein belongs to the gamma-glutamyl phosphate reductase family.

It localises to the cytoplasm. The catalysed reaction is L-glutamate 5-semialdehyde + phosphate + NADP(+) = L-glutamyl 5-phosphate + NADPH + H(+). Its pathway is amino-acid biosynthesis; L-proline biosynthesis; L-glutamate 5-semialdehyde from L-glutamate: step 2/2. Its function is as follows. Catalyzes the NADPH-dependent reduction of L-glutamate 5-phosphate into L-glutamate 5-semialdehyde and phosphate. The product spontaneously undergoes cyclization to form 1-pyrroline-5-carboxylate. In Yersinia pseudotuberculosis serotype O:1b (strain IP 31758), this protein is Gamma-glutamyl phosphate reductase.